Consider the following 319-residue polypeptide: COP9 signalosome complex subunit 6 (319 aa).

Residues 33 to 166 (VALHPLVILN…VSVYESVIDI (134 aa)) form the MPN domain.

This sequence belongs to the peptidase M67A family. CSN6 subfamily. In terms of assembly, component of the CSN complex, probably composed of cops1, cops2, cops3, cops4, cops5, cops6, cops7, cops8 and cops9.

It is found in the cytoplasm. Its subcellular location is the nucleus. Its function is as follows. Component of the COP9 signalosome complex (CSN), a complex involved in various cellular and developmental processes. The CSN complex is an essential regulator of the ubiquitin (Ubl) conjugation pathway by mediating the deneddylation of the cullin subunits of E3 ligase complexes, leading to modify the Ubl ligase activity. This Xenopus tropicalis (Western clawed frog) protein is COP9 signalosome complex subunit 6 (cops6).